Consider the following 7760-residue polypeptide: Malpinin synthetase (7760 aa).

Disordered stretches follow at residues 42-115 and 161-180; these read ENPE…VNEK and LDLPTDRPRPSHPSFEGDRV. The span at 65–79 shows a compositional bias: polar residues; it reads TPRSASPLSSYTGSP. The condensation 1 stretch occupies residues 87–389; it reads TELSRTLSGD…LSLDERTFLL (303 aa). Basic and acidic residues predominate over residues 164–180; that stretch reads PTDRPRPSHPSFEGDRV. The adenylation 1 stretch occupies residues 409 to 813; the sequence is FEQQAERRPH…GRNDHQVKIR (405 aa). Positions 926 to 1000 constitute a Carrier 1 domain; sequence PPQGELETAI…AFAHAIGQHR (75 aa). Position 961 is an O-(pantetheine 4'-phosphoryl)serine (serine 961). Positions 1046 to 1477 are dual epimerase/condensation (E/C) domain 1; the sequence is QDIYALAPLQ…VLPADERKLL (432 aa). The tract at residues 1498-1893 is adenylation 2; sequence FEQYADRVPN…GRTDYQVKIR (396 aa). In terms of domain architecture, Carrier 2 spans 2003 to 2077; sequence APEGEVENAI…ALAQSIGEHR (75 aa). Serine 2038 carries the O-(pantetheine 4'-phosphoryl)serine modification. The interval 2099-2558 is dual epimerase/condensation (E/C) domain 2; that stretch reads PLIDLNQNDI…LPTEERQLLT (460 aa). Residues 2578 to 2973 are adenylation 3; the sequence is FEQHVDRAPD…GRADFQVKIR (396 aa). Residues 3083–3157 form the Carrier 3 domain; that stretch reads APQGAVEAAI…ALAQSIGEHR (75 aa). Serine 3118 carries the post-translational modification O-(pantetheine 4'-phosphoryl)serine. Positions 3203–3634 are dual epimerase/condensation (E/C) domain 3; sequence QDIYALAPLQ…HLNVLPAEER (432 aa). An adenylation 4 region spans residues 3658–4057; the sequence is FEQQAERTPD…GRNDDQIKIR (400 aa). In terms of domain architecture, Carrier 4 spans 4174-4248; the sequence is APQGEVETAL…AFASRVQEQL (75 aa). Serine 4209 bears the O-(pantetheine 4'-phosphoryl)serine mark. The interval 4267 to 4705 is condensation 2; sequence LPLSFAQQRL…AAEILSQDER (439 aa). The segment at 4729-5133 is adenylation 5; sequence FEQRVESTPD…GRNDHQVKIR (405 aa). Positions 5250-5324 constitute a Carrier 5 domain; sequence APEGEVETAI…VFAASIGHHQ (75 aa). An O-(pantetheine 4'-phosphoryl)serine modification is found at serine 5285. Residues 5370–5804 form a dual dehydration/condensation (C*) domain region; that stretch reads QDIYSLSPLQ…VLPAEERTLL (435 aa). The tract at residues 5825–6224 is adenylation 6; sequence FEQQSERTPE…GRNDDQVKIR (400 aa). One can recognise a Carrier 6 domain in the interval 6338 to 6412; it reads APQGEVETAL…ALAQSIGQHH (75 aa). Position 6373 is an O-(pantetheine 4'-phosphoryl)serine (serine 6373). Positions 6458-6890 are dual epimerase/condensation (E/C) domain 4; sequence QDIYALSPLQ…QLDTVPAEEH (433 aa). The interval 6914–7300 is adenylation 7; sequence FEHQVERTPA…KFLPDGNVVC (387 aa). In terms of domain architecture, Carrier 7 spans 7428–7503; sequence EPRGAIENIL…ELAPRLLATG (76 aa). Serine 7463 bears the O-(pantetheine 4'-phosphoryl)serine mark. Residues 7561–7722 form a thioesterase (TE) domain region; it reads DNGNMASSLD…KPYVQGSIEV (162 aa).

It belongs to the NRP synthetase family.

Functionally, heptamodular nonribosomal peptide synthetase that catalyzes the biosynthesis of malpinins, natural products that show biosurfactant activities. Malpinins are acetylated hexapeptides (Ac-D-Leu/Val-D-Arg-D-Leu/Val-L-Phe/Leu-Dhb-D-Trp) containing a non-canonical amino acid derived from dehydration of L-Trp, (Z)-dehydrobutyrine (Dhb), at position 5, as well as a C-terminal D-amino acid, D-tryptophan, that can be oxidized to kynurenine. Incorporated D-amino acids in positions 1, 3 and 4 are variable resulting in the malpinin A-congeners malpinin B to E. Both modules M1 and M3 have relaxed specificity towards aliphatic amino acids (L-Leu &gt; L-Met &gt; L/D-Val &gt; L-Cys), explaining Val at position 1 and 3 in malpinin A-congeners malpinin B to D. The incorporation of L-Leu, but not N-acetyl-L-Leu by module 1 suggests the N-terminal acetylation occurs at a later stage of biosynthesis. Similar to M1 and M3, M4 has a broad substrate spectrum showing the highest activity with L-Phe followed by other hydrophobic amino acids (L-Phe &gt; L-Met = L-Trp). In contrast, M2, M5 and M6 are highly specific for L-Arg, L-Thr, and L-Trp, respectively. Solely, M7 converted its preferred substrate (L-Phe) with a 15 000-fold reduced turnover rate compared to the most active module M6, indicating that its A domain cannot contribute to the malpinin biosynthesis due to low activity. Since the last T domain in malA is apparently not loaded with an amino acid, either the TE domain must offload the oligopeptide from the preceding T domain or the dual E/C domain of M7 must transfer the final peptide chain to the free acceptor T domain of M7 prior to release. The protein is Malpinin synthetase of Mortierella alpina (Oleaginous fungus).